The primary structure comprises 513 residues: Probable DNA ligase (513 aa).

Glu-215 contacts ATP. The active-site N6-AMP-lysine intermediate is Lys-217. ATP is bound by residues Arg-222, Arg-237, Glu-266, Phe-306, Arg-378, and Lys-384.

Belongs to the ATP-dependent DNA ligase family. Mg(2+) is required as a cofactor.

It catalyses the reaction ATP + (deoxyribonucleotide)n-3'-hydroxyl + 5'-phospho-(deoxyribonucleotide)m = (deoxyribonucleotide)n+m + AMP + diphosphate.. Functionally, DNA ligase that seals nicks in double-stranded DNA during DNA replication, DNA recombination and DNA repair. The polypeptide is Probable DNA ligase (Mycobacterium marinum (strain ATCC BAA-535 / M)).